The primary structure comprises 312 residues: tRNA uridine(34) hydroxylase (312 aa).

The Rhodanese domain occupies 123–217 (SDPEVLLIDT…YLEEVPQEQS (95 aa)). The Cysteine persulfide intermediate role is filled by cysteine 177. The segment covering 282–293 (ARERQKQIELAR) has biased composition (basic and acidic residues). Positions 282-312 (ARERQKQIELARQRNQPHPLGRDPRQSTLEN) are disordered.

The protein belongs to the TrhO family.

The enzyme catalyses uridine(34) in tRNA + AH2 + O2 = 5-hydroxyuridine(34) in tRNA + A + H2O. Catalyzes oxygen-dependent 5-hydroxyuridine (ho5U) modification at position 34 in tRNAs. The chain is tRNA uridine(34) hydroxylase from Pseudomonas paraeruginosa (strain DSM 24068 / PA7) (Pseudomonas aeruginosa (strain PA7)).